The primary structure comprises 113 residues: UPF0482 protein YnfB (113 aa).

Positions methionine 1–alanine 28 are cleaved as a signal peptide.

It belongs to the UPF0482 family.

This chain is UPF0482 protein YnfB, found in Salmonella arizonae (strain ATCC BAA-731 / CDC346-86 / RSK2980).